We begin with the raw amino-acid sequence, 213 residues long: Uridine kinase (213 aa).

15–22 (GASASGKS) provides a ligand contact to ATP.

Belongs to the uridine kinase family.

It is found in the cytoplasm. It carries out the reaction uridine + ATP = UMP + ADP + H(+). It catalyses the reaction cytidine + ATP = CMP + ADP + H(+). It functions in the pathway pyrimidine metabolism; CTP biosynthesis via salvage pathway; CTP from cytidine: step 1/3. The protein operates within pyrimidine metabolism; UMP biosynthesis via salvage pathway; UMP from uridine: step 1/1. The sequence is that of Uridine kinase from Salmonella paratyphi A (strain ATCC 9150 / SARB42).